We begin with the raw amino-acid sequence, 673 residues long: Clotting factor G alpha subunit (673 aa).

A signal peptide spans 1 to 19; sequence MLVLLCCVVLHVGVARICC. Residues 27–257 enclose the GH16 domain; the sequence is LVWSDEFTNG…YVRVYQDAST (231 aa). The Nucleophile role is filled by E137. The active-site Proton donor is E142. N186 is a glycosylation site (N-linked (GlcNAc...) asparagine). A Ricin B-type lectin domain is found at 266-404; the sequence is LDGYYFVQNR…NQLSGQWKLI (139 aa). CBM6 domains lie at 411–533 and 549–671; these read KLIQ…IKIT and KLIQ…IRIT.

This sequence belongs to the glycosyl hydrolase 16 family. As to quaternary structure, clotting factor G is a heterodimer composed of two non-covalently associated subunits, alpha and beta. In terms of processing, in presence of (1-&gt;3)-beta-glucan, proteolytically cleaved into a 55kDa and a 17kDa forms. In terms of tissue distribution, expressed in hemocytes (at protein level).

Functionally, component of the heterodimer clotting factor G which may play a role in defense mechanisms against fungi. Initiates a (1-&gt;3)-beta-glucan-sensing clotting pathway whereby the alpha subunit binds to glucans containing (1-&gt;3)-beta linkages, which are components of the fungal cell wall, and the beta subunit catalyzes the activation of proclotting enzyme. The protein is Clotting factor G alpha subunit of Tachypleus tridentatus (Japanese horseshoe crab).